The primary structure comprises 141 residues: Large ribosomal subunit protein uL11 (141 aa).

It belongs to the universal ribosomal protein uL11 family. Part of the ribosomal stalk of the 50S ribosomal subunit. Interacts with L10 and the large rRNA to form the base of the stalk. L10 forms an elongated spine to which L12 dimers bind in a sequential fashion forming a multimeric L10(L12)X complex. One or more lysine residues are methylated.

Its function is as follows. Forms part of the ribosomal stalk which helps the ribosome interact with GTP-bound translation factors. The polypeptide is Large ribosomal subunit protein uL11 (Leptospira biflexa serovar Patoc (strain Patoc 1 / Ames)).